The chain runs to 781 residues: Sialidase (781 aa).

The N-terminal stretch at 1-24 (MRFKNVKKTALMLAMFGMATSSNA) is a signal peptide. Arg224 lines the substrate pocket. Asp250 (proton acceptor) is an active-site residue. 2 BNR repeats span residues 263–274 (RTSRDGGITWDT) and 585–596 (IYSDDGGSNWQT). Residue Glu619 is part of the active site. Arg635 serves as a coordination point for substrate. Residues 653–664 (FLSKDGGITWSL) form a BNR 3 repeat. Arg712 provides a ligand contact to substrate. One copy of the BNR 4 repeat lies at 718–729 (WFSFDEGVTWKG). Catalysis depends on Tyr740, which acts as the Nucleophile.

Belongs to the glycosyl hydrolase 33 family. As to quaternary structure, monomer. Requires Ca(2+) as cofactor.

Its subcellular location is the secreted. It carries out the reaction Hydrolysis of alpha-(2-&gt;3)-, alpha-(2-&gt;6)-, alpha-(2-&gt;8)- glycosidic linkages of terminal sialic acid residues in oligosaccharides, glycoproteins, glycolipids, colominic acid and synthetic substrates.. Its function is as follows. Cleaves the terminal sialic acid (N-acetyl neuraminic acid) from carbohydrate chains in glycoproteins providing free sialic acid which can be used as carbon and energy sources. Sialidases have been suggested to be pathogenic factors in microbial infections. Facilitates cholera toxin binding to host intestinal epithelial cells by converting cell surface polysialogangliosides to GM1 monogangliosides. This Vibrio cholerae serotype O1 (strain ATCC 39541 / Classical Ogawa 395 / O395) protein is Sialidase (nanH).